The sequence spans 312 residues: Ribosomal RNA small subunit methyltransferase H (312 aa).

The interval 1–24 (MNIMTANQGAVSPSQTESEASPPT) is disordered. S-adenosyl-L-methionine is bound by residues 55-57 (AGH), Asp72, Tyr96, Asp117, and Gln124. The segment at 288 to 312 (EQVDNPRARSAKLRVGERAAAPEGS) is disordered.

The protein belongs to the methyltransferase superfamily. RsmH family.

It is found in the cytoplasm. The enzyme catalyses cytidine(1402) in 16S rRNA + S-adenosyl-L-methionine = N(4)-methylcytidine(1402) in 16S rRNA + S-adenosyl-L-homocysteine + H(+). Its function is as follows. Specifically methylates the N4 position of cytidine in position 1402 (C1402) of 16S rRNA. The sequence is that of Ribosomal RNA small subunit methyltransferase H from Deinococcus radiodurans (strain ATCC 13939 / DSM 20539 / JCM 16871 / CCUG 27074 / LMG 4051 / NBRC 15346 / NCIMB 9279 / VKM B-1422 / R1).